A 129-amino-acid chain; its full sequence is Gas vesicle protein C (129 aa).

3 consecutive repeats follow at residues 19–51 (VTQLFRETHEFLSATTAHRQEQAKQQAQQLHQF), 52–84 (HQNLEQTTHEFLTETTTQRVAQAEAQANFLHKF), and 85–117 (HQNLEQTTQEFLAETAKNRTEQAKAQSQYLQQF). Positions 19–117 (VTQLFRETHE…KAQSQYLQQF (99 aa)) are 3 X 33 AA tandem repeats.

The protein belongs to the gas vesicle GvpC family.

Its subcellular location is the gas vesicle. Functionally, confers stability, involved in shaping gas vesicles, hollow, gas filled proteinaceous nanostructures. During planktonic growth they allow positioning of the organism at a favorable depth for light or nutrient acquisition. Cluster expression in E.coli (gvpA1-gvpA2-gvpC-gvpN-gvpJ-gvpK-gvpF-gvpG-gvpV-gvpW) allows cells to float and produces irregularly shaped gas vesicles. The polypeptide is Gas vesicle protein C (Nostoc sp. (strain PCC 7120 / SAG 25.82 / UTEX 2576)).